We begin with the raw amino-acid sequence, 380 residues long: Dual-specificity RNA methyltransferase RlmN (380 aa).

Residue Glu94 is the Proton acceptor of the active site. The region spanning 100–339 is the Radical SAM core domain; that stretch reads DGDRATLCVS…VTVRKTRGDD (240 aa). Cys107 and Cys344 are disulfide-bonded. Positions 114, 118, and 121 each coordinate [4Fe-4S] cluster. Residues 168 to 169, Ser200, 222 to 224, and Asn301 each bind S-adenosyl-L-methionine; these read GE and SLH. Cys344 functions as the S-methylcysteine intermediate in the catalytic mechanism.

Belongs to the radical SAM superfamily. RlmN family. The cofactor is [4Fe-4S] cluster.

It localises to the cytoplasm. The catalysed reaction is adenosine(2503) in 23S rRNA + 2 reduced [2Fe-2S]-[ferredoxin] + 2 S-adenosyl-L-methionine = 2-methyladenosine(2503) in 23S rRNA + 5'-deoxyadenosine + L-methionine + 2 oxidized [2Fe-2S]-[ferredoxin] + S-adenosyl-L-homocysteine. It catalyses the reaction adenosine(37) in tRNA + 2 reduced [2Fe-2S]-[ferredoxin] + 2 S-adenosyl-L-methionine = 2-methyladenosine(37) in tRNA + 5'-deoxyadenosine + L-methionine + 2 oxidized [2Fe-2S]-[ferredoxin] + S-adenosyl-L-homocysteine. Its function is as follows. Specifically methylates position 2 of adenine 2503 in 23S rRNA and position 2 of adenine 37 in tRNAs. m2A2503 modification seems to play a crucial role in the proofreading step occurring at the peptidyl transferase center and thus would serve to optimize ribosomal fidelity. In Vibrio atlanticus (strain LGP32) (Vibrio splendidus (strain Mel32)), this protein is Dual-specificity RNA methyltransferase RlmN.